A 294-amino-acid polypeptide reads, in one-letter code: Antiviral protein alpha (294 aa).

Positions 1 to 24 (MKMMVVVVVMMLSWLILKPPSTWA) are cleaved as a signal peptide. Cystine bridges form between Cys58-Cys282 and Cys108-Cys130. Glu199 is an active-site residue. A propeptide spanning residues 286 to 294 (YQSAMFPHL) is cleaved from the precursor.

This sequence belongs to the ribosome-inactivating protein family. Type 1 RIP subfamily. As to quaternary structure, monomer.

It localises to the secreted. It is found in the cell wall. It catalyses the reaction Endohydrolysis of the N-glycosidic bond at one specific adenosine on the 28S rRNA.. Inhibits viral infection of plants, and protein synthesis in vitro. Has also been shown to inhibit the replication of mammalian viruses. The protein may provide a means of cellular suicide upon invasion by a virus. In Phytolacca americana (American pokeweed), this protein is Antiviral protein alpha.